Here is a 231-residue protein sequence, read N- to C-terminus: Phosphoribosylformylglycinamidine synthase subunit PurQ (231 aa).

The region spanning 3–231 is the Glutamine amidotransferase type-1 domain; the sequence is FGVLIFPGSN…ESMVGAMAKR (229 aa). Catalysis depends on cysteine 86, which acts as the Nucleophile. Residues histidine 203 and glutamate 205 contribute to the active site.

In terms of assembly, part of the FGAM synthase complex composed of 1 PurL, 1 PurQ and 2 PurS subunits.

It is found in the cytoplasm. The catalysed reaction is N(2)-formyl-N(1)-(5-phospho-beta-D-ribosyl)glycinamide + L-glutamine + ATP + H2O = 2-formamido-N(1)-(5-O-phospho-beta-D-ribosyl)acetamidine + L-glutamate + ADP + phosphate + H(+). It carries out the reaction L-glutamine + H2O = L-glutamate + NH4(+). It participates in purine metabolism; IMP biosynthesis via de novo pathway; 5-amino-1-(5-phospho-D-ribosyl)imidazole from N(2)-formyl-N(1)-(5-phospho-D-ribosyl)glycinamide: step 1/2. Its function is as follows. Part of the phosphoribosylformylglycinamidine synthase complex involved in the purines biosynthetic pathway. Catalyzes the ATP-dependent conversion of formylglycinamide ribonucleotide (FGAR) and glutamine to yield formylglycinamidine ribonucleotide (FGAM) and glutamate. The FGAM synthase complex is composed of three subunits. PurQ produces an ammonia molecule by converting glutamine to glutamate. PurL transfers the ammonia molecule to FGAR to form FGAM in an ATP-dependent manner. PurS interacts with PurQ and PurL and is thought to assist in the transfer of the ammonia molecule from PurQ to PurL. The protein is Phosphoribosylformylglycinamidine synthase subunit PurQ of Koribacter versatilis (strain Ellin345).